Reading from the N-terminus, the 357-residue chain is Membrane-bound lytic murein transglycosylase C (357 aa).

The first 15 residues, 1–15 (MKKYLLLALLPFLYA), serve as a signal peptide directing secretion. Cys16 is lipidated: N-palmitoyl cysteine. Cys16 carries S-diacylglycerol cysteine lipidation.

It belongs to the transglycosylase Slt family.

It localises to the cell outer membrane. The enzyme catalyses Exolytic cleavage of the (1-&gt;4)-beta-glycosidic linkage between N-acetylmuramic acid (MurNAc) and N-acetylglucosamine (GlcNAc) residues in peptidoglycan, from either the reducing or the non-reducing ends of the peptidoglycan chains, with concomitant formation of a 1,6-anhydrobond in the MurNAc residue.. Murein-degrading enzyme. May play a role in recycling of muropeptides during cell elongation and/or cell division. In Haemophilus influenzae (strain 86-028NP), this protein is Membrane-bound lytic murein transglycosylase C.